The sequence spans 1400 residues: DNA-directed RNA polymerase subunit beta (1400 aa).

It belongs to the RNA polymerase beta chain family. The RNAP catalytic core consists of 2 alpha, 1 beta, 1 beta' and 1 omega subunit. When a sigma factor is associated with the core the holoenzyme is formed, which can initiate transcription.

It catalyses the reaction RNA(n) + a ribonucleoside 5'-triphosphate = RNA(n+1) + diphosphate. DNA-dependent RNA polymerase catalyzes the transcription of DNA into RNA using the four ribonucleoside triphosphates as substrates. The polypeptide is DNA-directed RNA polymerase subunit beta (Acidiphilium cryptum (strain JF-5)).